The following is a 33-amino-acid chain: Cytochrome b6-f complex subunit 7 (33 aa).

A helical transmembrane segment spans residues 5 to 25 (IFNTAVITFTLVLVGLGAGYL).

The protein belongs to the PetM family. In terms of assembly, the 4 large subunits of the cytochrome b6-f complex are cytochrome b6, subunit IV (17 kDa polypeptide, PetD), cytochrome f and the Rieske protein, while the 4 small subunits are PetG, PetL, PetM and PetN. The complex functions as a dimer.

Its subcellular location is the cellular thylakoid membrane. Its function is as follows. Component of the cytochrome b6-f complex, which mediates electron transfer between photosystem II (PSII) and photosystem I (PSI), cyclic electron flow around PSI, and state transitions. The chain is Cytochrome b6-f complex subunit 7 from Thermosynechococcus vestitus (strain NIES-2133 / IAM M-273 / BP-1).